The primary structure comprises 71 residues: UPF0435 protein RBAM_008100 (71 aa).

It belongs to the UPF0435 family.

The chain is UPF0435 protein RBAM_008100 from Bacillus velezensis (strain DSM 23117 / BGSC 10A6 / LMG 26770 / FZB42) (Bacillus amyloliquefaciens subsp. plantarum).